A 793-amino-acid chain; its full sequence is Putative glutamate--cysteine ligase 2-3 (793 aa).

Positions 1-407 (MLASDPRKVG…RFWDRGDTAD (407 aa)) are carboxylate-amine ligase. A disordered region spans residues 367–390 (TEHLPDVEVPPPREPGPKSTGAGR). The tract at residues 408 to 793 (MTWTESTELD…ALTRLEDQSG (386 aa)) is peptidase M20.

The protein in the C-terminal section; belongs to the glutamate--cysteine ligase type 2 family. YbdK subfamily.

The enzyme catalyses L-cysteine + L-glutamate + ATP = gamma-L-glutamyl-L-cysteine + ADP + phosphate + H(+). Its function is as follows. ATP-dependent carboxylate-amine ligase which exhibits weak glutamate--cysteine ligase activity. The polypeptide is Putative glutamate--cysteine ligase 2-3 (Rhodococcus jostii (strain RHA1)).